Here is a 215-residue protein sequence, read N- to C-terminus: Large ribosomal subunit protein uL4c (215 aa).

A disordered region spans residues Gln-51–Ser-87. A compositionally biased stretch (basic residues) spans Gly-67–Gly-78.

This sequence belongs to the universal ribosomal protein uL4 family. In terms of assembly, part of the 50S ribosomal subunit.

It localises to the plastid. The protein resides in the chloroplast. Functionally, probably binds the 23S rRNA. The polypeptide is Large ribosomal subunit protein uL4c (rpl4) (Thalassiosira pseudonana (Marine diatom)).